Consider the following 1232-residue polypeptide: Chromosome-associated kinesin KIF4A (1232 aa).

A Kinesin motor domain is found at 9–336 (PVRVALRCRP…LRYADRARKI (328 aa)). 88–95 (GQTGSGKT) contributes to the ATP binding site. Positions 350 to 999 (ELNHLKQQVQ…IKQKLTLLQV (650 aa)) form a coiled coil. Phosphoserine is present on S394. A disordered region spans residues 496–515 (AQVETSPETSRSSDAFTTQH). The span at 497 to 515 (QVETSPETSRSSDAFTTQH) shows a compositional bias: polar residues. The tract at residues 663 to 1232 (QWKQKKDKEV…GCSPIEEEAH (570 aa)) is required for the interaction with PRC1. A Nuclear localization signal motif is present at residues 793 to 798 (PKLRRR). A Phosphothreonine modification is found at T799. Residues S801, S810, S815, and S951 each carry the phosphoserine modification. Phosphothreonine is present on T995. The tract at residues 1000–1232 (ASRQKHLPKD…GCSPIEEEAH (233 aa)) is globular. Phosphoserine occurs at positions 1001, 1013, 1017, 1028, and 1126. Positions 1086–1144 (CSCKGWCGNKQCGCRKQKSDCGVDCCCDPTKCRNRQQGKDSLGTVERTQDSEGSFKLED) are CRD; required for [4Fe-4S] cluster binding and localization to the spindle midzone and midbody during anaphase and telophase. The tract at residues 1122–1142 (QGKDSLGTVERTQDSEGSFKL) is disordered. The span at 1132–1142 (RTQDSEGSFKL) shows a compositional bias: basic and acidic residues. Phosphothreonine is present on T1181. S1186 is subject to Phosphoserine. K1194 participates in a covalent cross-link: Glycyl lysine isopeptide (Lys-Gly) (interchain with G-Cter in SUMO2). Position 1225 is a phosphoserine (S1225).

Belongs to the TRAFAC class myosin-kinesin ATPase superfamily. Kinesin family. Chromokinesin subfamily. In terms of assembly, interacts with the cytosolic iron-sulfur protein assembly (CIA) complex components CIAO2B and MMS19; the interactions facilitate the transfer of Fe-S clusters to KIF4A to ensure proper localization of KIF4A to mitotic machinery components. Interacts (via C-terminus) with unphosphorylated PRC1 (via N-terminus); the interaction is required for the progression of mitosis. It depends on [2Fe-2S] cluster as a cofactor. The cofactor is [4Fe-4S] cluster. As to expression, highly expressed in hematopoietic tissues, fetal liver, spleen, thymus and adult thymus and bone marrow. Lower levels are found in heart, testis, kidney, colon and lung.

It is found in the nucleus matrix. It localises to the cytoplasm. The protein resides in the cytoskeleton. Its subcellular location is the spindle. The protein localises to the midbody. It is found in the chromosome. Iron-sulfur (Fe-S) cluster binding motor protein that has a role in chromosome segregation during mitosis. Translocates PRC1 to the plus ends of interdigitating spindle microtubules during the metaphase to anaphase transition, an essential step for the formation of an organized central spindle midzone and midbody and for successful cytokinesis. May play a role in mitotic chromosomal positioning and bipolar spindle stabilization. The sequence is that of Chromosome-associated kinesin KIF4A (KIF4A) from Homo sapiens (Human).